The sequence spans 607 residues: tRNA uridine 5-carboxymethylaminomethyl modification enzyme MnmG (607 aa).

FAD is bound by residues 11–16 (GGGHAG), valine 123, and serine 178. NAD(+) is bound at residue 270–284 (GPRYCPSVEDKIVRF). Glutamine 367 lines the FAD pocket.

The protein belongs to the MnmG family. As to quaternary structure, homodimer. Heterotetramer of two MnmE and two MnmG subunits. FAD serves as cofactor.

Its subcellular location is the cytoplasm. Functionally, NAD-binding protein involved in the addition of a carboxymethylaminomethyl (cmnm) group at the wobble position (U34) of certain tRNAs, forming tRNA-cmnm(5)s(2)U34. This chain is tRNA uridine 5-carboxymethylaminomethyl modification enzyme MnmG, found in Metamycoplasma arthritidis (strain 158L3-1) (Mycoplasma arthritidis).